Consider the following 130-residue polypeptide: Small ribosomal subunit protein uS8 (130 aa).

Belongs to the universal ribosomal protein uS8 family. As to quaternary structure, part of the 30S ribosomal subunit. Contacts proteins S5 and S12.

One of the primary rRNA binding proteins, it binds directly to 16S rRNA central domain where it helps coordinate assembly of the platform of the 30S subunit. This Buchnera aphidicola subsp. Cinara cedri (strain Cc) protein is Small ribosomal subunit protein uS8.